We begin with the raw amino-acid sequence, 392 residues long: Putative cystathionine gamma-lyase 2 (392 aa).

The segment at 32-55 is disordered; it reads LSSTYKQDNPGEPKGHDYSRAGNP. Residues 40-50 are compositionally biased toward basic and acidic residues; the sequence is NPGEPKGHDYS. The substrate site is built by Arg51, Tyr103, and Arg108. At Lys203 the chain carries N6-(pyridoxal phosphate)lysine. Substrate is bound at residue Glu330.

The protein belongs to the trans-sulfuration enzymes family. Pyridoxal 5'-phosphate is required as a cofactor.

It localises to the cytoplasm. It carries out the reaction L,L-cystathionine + H2O = 2-oxobutanoate + L-cysteine + NH4(+). It participates in amino-acid biosynthesis; L-cysteine biosynthesis; L-cysteine from L-homocysteine and L-serine: step 2/2. This is Putative cystathionine gamma-lyase 2 (cth-2) from Caenorhabditis elegans.